Here is an 827-residue protein sequence, read N- to C-terminus: Glycerol-3-phosphate acyltransferase 1, mitochondrial (827 aa).

The Cytoplasmic portion of the chain corresponds to 1-87; it reads MEESSVTVGT…FFNPSIPSLG (87 aa). An important for mitochondrial localization region spans residues 80-120; that stretch reads NPSIPSLGLRNVIYINETHTRHRGWLARRLSYILFVQERDV. Residues 88–118 lie within the membrane without spanning it; that stretch reads LRNVIYINETHTRHRGWLARRLSYILFVQER. At 119–827 the chain is on the cytoplasmic side; that stretch reads DVHKGMFATS…LEYILSFVVL (709 aa). The short motif at 230-235 is the HXXXXD motif element; it reads HRSHID. CoA-binding residues include Arg278, Arg279, Lys288, Arg293, and Arg328. Ser380 bears the Phosphoserine mark. Position 462 (Arg462) interacts with CoA. 2 positions are modified to phosphoserine: Ser687 and Ser694. Residues Lys779 and Lys783 each carry the N6-acetyllysine modification.

It belongs to the GPAT/DAPAT family. As to expression, highest levels in liver, intermediate levels in muscle and kidney, and lowest levels in lung and brain.

The protein localises to the mitochondrion outer membrane. It catalyses the reaction sn-glycerol 3-phosphate + an acyl-CoA = a 1-acyl-sn-glycero-3-phosphate + CoA. The catalysed reaction is (9Z,12Z)-octadecadienoyl-CoA + sn-glycerol 3-phosphate = 1-(9Z,12Z)-octadecadienoyl-sn-glycero-3-phosphate + CoA. The enzyme catalyses sn-glycerol 3-phosphate + (9Z)-octadecenoyl-CoA = 1-(9Z-octadecenoyl)-sn-glycero-3-phosphate + CoA. It carries out the reaction sn-glycerol 3-phosphate + octadecanoyl-CoA = 1-octadecanoyl-sn-glycero-3-phosphate + CoA. It catalyses the reaction sn-glycerol 3-phosphate + hexadecanoyl-CoA = 1-hexadecanoyl-sn-glycero-3-phosphate + CoA. The catalysed reaction is dodecanoyl-CoA + sn-glycerol 3-phosphate = 1-dodecanoyl-sn-glycerol 3-phosphate + CoA. The enzyme catalyses 1-acyl-sn-glycero-3-phospho-(1'-sn-glycerol) + an acyl-CoA = a 1,2-diacyl-sn-glycero-3-phospho-(1'-sn-glycerol) + CoA. The protein operates within phospholipid metabolism; CDP-diacylglycerol biosynthesis; CDP-diacylglycerol from sn-glycerol 3-phosphate: step 1/3. Mitochondrial membrane protein that catalyzes the essential first step of biosynthesis of glycerolipids such as triglycerides, phosphatidic acids and lysophosphatidic acids. Esterifies acyl-group from acyl-coenzyme A (acyl-CoA) to the sn-1 position of glycerol-3-phosphate, to produce lysophosphatidic acid. Has a narrow hydrophobic binding cleft that selects for a linear acyl chain. Catalytic activity is higher for substrates with a 16-carbon acyl chain. The protein is Glycerol-3-phosphate acyltransferase 1, mitochondrial of Mus musculus (Mouse).